The primary structure comprises 441 residues: ATP-dependent protease ATPase subunit HslU (441 aa).

Residues isoleucine 18 and 60 to 65 (GVGKTE) contribute to the ATP site. The tract at residues 131–158 (ILDALLPRPRGSEYDHARDESSTRQTFR) is disordered. Basic and acidic residues predominate over residues 140 to 152 (RGSEYDHARDESS). ATP is bound by residues aspartate 254, glutamate 320, and arginine 392.

Belongs to the ClpX chaperone family. HslU subfamily. In terms of assembly, a double ring-shaped homohexamer of HslV is capped on each side by a ring-shaped HslU homohexamer. The assembly of the HslU/HslV complex is dependent on binding of ATP.

It localises to the cytoplasm. In terms of biological role, ATPase subunit of a proteasome-like degradation complex; this subunit has chaperone activity. The binding of ATP and its subsequent hydrolysis by HslU are essential for unfolding of protein substrates subsequently hydrolyzed by HslV. HslU recognizes the N-terminal part of its protein substrates and unfolds these before they are guided to HslV for hydrolysis. The protein is ATP-dependent protease ATPase subunit HslU of Chromohalobacter salexigens (strain ATCC BAA-138 / DSM 3043 / CIP 106854 / NCIMB 13768 / 1H11).